Consider the following 38-residue polypeptide: Large ribosomal subunit protein bL36 (38 aa).

The protein belongs to the bacterial ribosomal protein bL36 family.

The protein is Large ribosomal subunit protein bL36 of Buchnera aphidicola subsp. Schizaphis graminum (strain Sg).